Reading from the N-terminus, the 1056-residue chain is Carbamoyl phosphate synthase large chain (1056 aa).

The carboxyphosphate synthetic domain stretch occupies residues 1-397 (MPKKSHIKKV…AFKKALRSLD (397 aa)). Positions 127, 167, 173, 174, 206, 208, 213, 239, 240, 241, 282, and 294 each coordinate ATP. The ATP-grasp 1 domain maps to 131-323 (RDLMNAIGEP…IARVAAKIAI (193 aa)). Mg(2+) is bound by residues Q282, E294, and N296. Q282, E294, and N296 together coordinate Mn(2+). An oligomerization domain region spans residues 398-530 (NDMQQHTNPS…YSTWEEGCEL (133 aa)). The carbamoyl phosphate synthetic domain stretch occupies residues 531 to 920 (VRDSAKKVLI…YKACTAADNT (390 aa)). The ATP-grasp 2 domain occupies 662–853 (SRLLTRLEIP…LAKIAAKVMV (192 aa)). Positions 698, 737, 739, 744, 769, 770, 771, 772, 812, and 824 each coordinate ATP. Mg(2+)-binding residues include Q812, E824, and N826. The Mn(2+) site is built by Q812, E824, and N826. Residues 919–1056 (NTLPTTGNVF…EPLGHYHGLM (138 aa)) form the MGS-like domain. An allosteric domain region spans residues 921 to 1056 (LPTTGNVFIS…EPLGHYHGLM (136 aa)).

The protein belongs to the CarB family. Composed of two chains; the small (or glutamine) chain promotes the hydrolysis of glutamine to ammonia, which is used by the large (or ammonia) chain to synthesize carbamoyl phosphate. Tetramer of heterodimers (alpha,beta)4. Mg(2+) serves as cofactor. Requires Mn(2+) as cofactor.

The catalysed reaction is hydrogencarbonate + L-glutamine + 2 ATP + H2O = carbamoyl phosphate + L-glutamate + 2 ADP + phosphate + 2 H(+). The enzyme catalyses hydrogencarbonate + NH4(+) + 2 ATP = carbamoyl phosphate + 2 ADP + phosphate + 2 H(+). Its pathway is amino-acid biosynthesis; L-arginine biosynthesis; carbamoyl phosphate from bicarbonate: step 1/1. It functions in the pathway pyrimidine metabolism; UMP biosynthesis via de novo pathway; (S)-dihydroorotate from bicarbonate: step 1/3. In terms of biological role, large subunit of the glutamine-dependent carbamoyl phosphate synthetase (CPSase). CPSase catalyzes the formation of carbamoyl phosphate from the ammonia moiety of glutamine, carbonate, and phosphate donated by ATP, constituting the first step of 2 biosynthetic pathways, one leading to arginine and/or urea and the other to pyrimidine nucleotides. The large subunit (synthetase) binds the substrates ammonia (free or transferred from glutamine from the small subunit), hydrogencarbonate and ATP and carries out an ATP-coupled ligase reaction, activating hydrogencarbonate by forming carboxy phosphate which reacts with ammonia to form carbamoyl phosphate. The protein is Carbamoyl phosphate synthase large chain of Methanoculleus marisnigri (strain ATCC 35101 / DSM 1498 / JR1).